The chain runs to 501 residues: Probable malate:quinone oxidoreductase (501 aa).

This sequence belongs to the MQO family. It depends on FAD as a cofactor.

It catalyses the reaction (S)-malate + a quinone = a quinol + oxaloacetate. It functions in the pathway carbohydrate metabolism; tricarboxylic acid cycle; oxaloacetate from (S)-malate (quinone route): step 1/1. This is Probable malate:quinone oxidoreductase from Geobacillus kaustophilus (strain HTA426).